A 1030-amino-acid polypeptide reads, in one-letter code: E3 ubiquitin-protein ligase mib1 (1030 aa).

One can recognise an MIB/HERC2 1 domain in the interval 6–74; it reads NNRVMMEGVG…AYDVRILDSA (69 aa). The ZZ-type zinc finger occupies 80 to 132; that stretch reads HDGTMCDTCRQQPIIGIRWKCAECTNYDLCTTCYHGDKHHLRHRFYRITTPGS. Residues Cys-85, Cys-88, Cys-100, Cys-103, Cys-109, Cys-112, His-118, and His-122 each coordinate Zn(2+). The MIB/HERC2 2 domain maps to 143–221; that stretch reads SKKITARGIF…MSDLKCVQDA (79 aa). 9 ANK repeats span residues 430–460, 463–492, 496–525, 529–558, 562–591, 595–627, 631–661, 665–694, and 698–727; these read DINE…DVNG, AGHT…DLEA, DGDR…DLNA, RRQT…HPSL, EGDT…DVTI, NGFN…IVDE, DGYT…NLDV, NQQT…KLDV, and DGDT…VSKV. RING-type zinc fingers lie at residues 817-852 and 864-899; these read CMVC…LICK and CVVC…VQCR. The stretch at 957–986 forms a coiled coil; it reads ALQRDKDNTNVNADVQKLQQQLQDIKEQTM. The RING-type 3 zinc-finger motif lies at 987–1020; sequence CPVCLDRLKNMIFMCGHGTCQLCGDRMSECPICR.

As to quaternary structure, interacts with deltaA (dla) and deltaD (dld).

It localises to the cytoplasm. The protein resides in the cytoskeleton. Its subcellular location is the microtubule organizing center. It is found in the centrosome. The protein localises to the centriolar satellite. It localises to the cell membrane. The enzyme catalyses S-ubiquitinyl-[E2 ubiquitin-conjugating enzyme]-L-cysteine + [acceptor protein]-L-lysine = [E2 ubiquitin-conjugating enzyme]-L-cysteine + N(6)-ubiquitinyl-[acceptor protein]-L-lysine.. It functions in the pathway protein modification; protein ubiquitination. Its function is as follows. E3 ubiquitin-protein ligase that mediates ubiquitination of Delta receptors, which act as ligands of Notch proteins. Positively regulates the Delta-mediated Notch signaling by ubiquitinating the intracellular domain of Delta, leading to endocytosis of Delta receptors. It thereby participates in many processes regulated by the Notch signaling pathway, such as midline cell fate specification prior to germ layer formation, patterning of sensory cell differentiation in the ear, neurogenesis of the hindbrain and commitment to a secretory fate in the intestine. Essential for early embryonic development. This is E3 ubiquitin-protein ligase mib1 (mib1) from Danio rerio (Zebrafish).